The chain runs to 97 residues: YcgL domain-containing protein PA14_47450 (97 aa).

One can recognise a YcgL domain in the interval 3–87 (RICSVYKSPR…GEEEYIEHLP (85 aa)).

The protein is YcgL domain-containing protein PA14_47450 of Pseudomonas aeruginosa (strain UCBPP-PA14).